A 311-amino-acid chain; its full sequence is tRNA-cytidine(32) 2-sulfurtransferase (311 aa).

The short motif at 47-52 (SGGKDS) is the PP-loop motif element. Residues Cys122, Cys125, and Cys213 each coordinate [4Fe-4S] cluster.

Belongs to the TtcA family. As to quaternary structure, homodimer. Requires Mg(2+) as cofactor. It depends on [4Fe-4S] cluster as a cofactor.

It is found in the cytoplasm. The catalysed reaction is cytidine(32) in tRNA + S-sulfanyl-L-cysteinyl-[cysteine desulfurase] + AH2 + ATP = 2-thiocytidine(32) in tRNA + L-cysteinyl-[cysteine desulfurase] + A + AMP + diphosphate + H(+). It participates in tRNA modification. In terms of biological role, catalyzes the ATP-dependent 2-thiolation of cytidine in position 32 of tRNA, to form 2-thiocytidine (s(2)C32). The sulfur atoms are provided by the cysteine/cysteine desulfurase (IscS) system. The protein is tRNA-cytidine(32) 2-sulfurtransferase of Enterobacter sp. (strain 638).